The following is a 238-amino-acid chain: Large ribosomal subunit protein bL25 (238 aa).

Residues 1 to 10 (MATTVKELKA) are compositionally biased toward basic and acidic residues. The segment at 1 to 24 (MATTVKELKATARPKSGKGAARAE) is disordered.

It belongs to the bacterial ribosomal protein bL25 family. CTC subfamily. In terms of assembly, part of the 50S ribosomal subunit; part of the 5S rRNA/L5/L18/L25 subcomplex. Contacts the 5S rRNA. Binds to the 5S rRNA independently of L5 and L18.

Functionally, this is one of the proteins that binds to the 5S RNA in the ribosome where it forms part of the central protuberance. The sequence is that of Large ribosomal subunit protein bL25 from Bradyrhizobium diazoefficiens (strain JCM 10833 / BCRC 13528 / IAM 13628 / NBRC 14792 / USDA 110).